A 290-amino-acid chain; its full sequence is ATP synthase gamma chain (290 aa).

This sequence belongs to the ATPase gamma chain family. In terms of assembly, F-type ATPases have 2 components, CF(1) - the catalytic core - and CF(0) - the membrane proton channel. CF(1) has five subunits: alpha(3), beta(3), gamma(1), delta(1), epsilon(1). CF(0) has three main subunits: a, b and c.

Its subcellular location is the cell inner membrane. Functionally, produces ATP from ADP in the presence of a proton gradient across the membrane. The gamma chain is believed to be important in regulating ATPase activity and the flow of protons through the CF(0) complex. In Dinoroseobacter shibae (strain DSM 16493 / NCIMB 14021 / DFL 12), this protein is ATP synthase gamma chain.